A 101-amino-acid chain; its full sequence is Small ribosomal subunit protein uS14 (101 aa).

The segment at 53–72 (RDAAAVRVRNRDSHDGRPRG) is disordered. Residues 61 to 70 (RNRDSHDGRP) are compositionally biased toward basic and acidic residues.

Belongs to the universal ribosomal protein uS14 family. As to quaternary structure, part of the 30S ribosomal subunit. Contacts proteins S3 and S10.

Its function is as follows. Binds 16S rRNA, required for the assembly of 30S particles and may also be responsible for determining the conformation of the 16S rRNA at the A site. In Corynebacterium glutamicum (strain R), this protein is Small ribosomal subunit protein uS14.